Reading from the N-terminus, the 306-residue chain is Glutathione transport system permease protein GsiC (306 aa).

Residues 1-8 (MLNYVIKR) are Cytoplasmic-facing. A helical membrane pass occupies residues 9–29 (LLGLIPTLFIVSVLVFLFVHM). Residues 30–102 (LPGDPARLIA…SRFMPTLWLT (73 aa)) are Periplasmic-facing. Residues 95 to 292 (FMPTLWLTIT…LEFILINLVV (198 aa)) enclose the ABC transmembrane type-1 domain. The chain crosses the membrane as a helical span at residues 103-123 (ITSMVWAVIFGMAAGIIAAVW). Residues 124 to 134 (RNRWPDRLSMT) are Cytoplasmic-facing. A helical membrane pass occupies residues 135–155 (IAVSGISFPAFALGMLLIQVF). Residues 156–168 (SVELGWLPTVGAD) are Periplasmic-facing. The chain crosses the membrane as a helical span at residues 169–189 (SWQHYILSSLTLGAAVAAVMA). At 190 to 228 (RFTRASFVDVLSEDYMRTARAKGVSETWVVLKHGLRNAM) the chain is on the cytoplasmic side. Residues 229 to 249 (IPVVTMMGLQFGFLLGGSIVV) form a helical membrane-spanning segment. The Periplasmic segment spans residues 250-277 (EKVFNWPGLGRLLVDSVEMRDYPVIQAE). Residues 278-298 (ILLFSLEFILINLVVDVLYAA) form a helical membrane-spanning segment. At 299 to 306 (INPAIRYK) the chain is on the cytoplasmic side.

This sequence belongs to the binding-protein-dependent transport system permease family. In terms of assembly, the complex is composed of two ATP-binding proteins (GsiA), two transmembrane proteins (GsiC and GsiD) and a solute-binding protein (GsiB).

Its subcellular location is the cell inner membrane. Its function is as follows. Part of the ABC transporter complex GsiABCD involved in glutathione import. Probably responsible for the translocation of the substrate across the membrane. The sequence is that of Glutathione transport system permease protein GsiC from Shigella boydii serotype 4 (strain Sb227).